Consider the following 23-residue polypeptide: Fimbrial protein (23 aa).

Cysteines 8 and 21 form a disulfide.

It belongs to the N-Me-Phe pilin family. As to quaternary structure, the pili are polar flexible filaments of about 5.4 nanometers diameter and 2.5 micrometers average length; they consist of only a single polypeptide chain arranged in a helical configuration of five subunits per turn in the assembled pilus.

The protein localises to the fimbrium. The sequence is that of Fimbrial protein (pil) from Pseudomonas aeruginosa.